A 333-amino-acid chain; its full sequence is Protoheme IX farnesyltransferase (333 aa).

7 helical membrane-spanning segments follow: residues 64-84 (LICTLGGGALAAAAAGALNCL), 110-130 (TVFLAAVSCTLAASMLLVSGV), 133-153 (LAAGLTLLGLFSYVILYTVIL), 161-181 (IVFGGVAGAIPPLVGASAATG), 189-209 (WLFGLVMLWTPAHFWALAILL), 246-266 (IMGVFALPEGGLLYGIMLLPF), and 287-307 (AKSLFRWSILYMFGICLLLLI).

Belongs to the UbiA prenyltransferase family. Protoheme IX farnesyltransferase subfamily.

The protein localises to the cell inner membrane. The enzyme catalyses heme b + (2E,6E)-farnesyl diphosphate + H2O = Fe(II)-heme o + diphosphate. It functions in the pathway porphyrin-containing compound metabolism; heme O biosynthesis; heme O from protoheme: step 1/1. In terms of biological role, converts heme B (protoheme IX) to heme O by substitution of the vinyl group on carbon 2 of heme B porphyrin ring with a hydroxyethyl farnesyl side group. The chain is Protoheme IX farnesyltransferase from Prochlorococcus marinus (strain AS9601).